Here is a 195-residue protein sequence, read N- to C-terminus: Putative inactive carbonic anhydrase 5B-like protein (195 aa).

Residue 121–122 (TT) coordinates substrate.

The protein belongs to the alpha-carbonic anhydrase family.

The sequence is that of Putative inactive carbonic anhydrase 5B-like protein (CA5BP1) from Homo sapiens (Human).